Reading from the N-terminus, the 237-residue chain is Ribosomal RNA small subunit methyltransferase G (237 aa).

S-adenosyl-L-methionine is bound by residues glycine 76, phenylalanine 81, 128–129, and arginine 147; that span reads IE.

Belongs to the methyltransferase superfamily. RNA methyltransferase RsmG family.

It localises to the cytoplasm. Specifically methylates the N7 position of a guanine in 16S rRNA. The polypeptide is Ribosomal RNA small subunit methyltransferase G (Prochlorococcus marinus (strain MIT 9301)).